The primary structure comprises 430 residues: Tol-Pal system protein TolB (430 aa).

The signal sequence occupies residues 1-21 (MKQALRVAFGFLMLWAAMLHA).

The protein belongs to the TolB family. In terms of assembly, the Tol-Pal system is composed of five core proteins: the inner membrane proteins TolA, TolQ and TolR, the periplasmic protein TolB and the outer membrane protein Pal. They form a network linking the inner and outer membranes and the peptidoglycan layer.

It is found in the periplasm. Its function is as follows. Part of the Tol-Pal system, which plays a role in outer membrane invagination during cell division and is important for maintaining outer membrane integrity. TolB occupies a key intermediary position in the Tol-Pal system because it communicates directly with both membrane-embedded components, Pal in the outer membrane and TolA in the inner membrane. This is Tol-Pal system protein TolB from Escherichia fergusonii (strain ATCC 35469 / DSM 13698 / CCUG 18766 / IAM 14443 / JCM 21226 / LMG 7866 / NBRC 102419 / NCTC 12128 / CDC 0568-73).